The following is a 156-amino-acid chain: Crossover junction endodeoxyribonuclease RuvC (156 aa).

Catalysis depends on residues D7, E66, and D138. Positions 7, 66, and 138 each coordinate Mg(2+).

This sequence belongs to the RuvC family. As to quaternary structure, homodimer which binds Holliday junction (HJ) DNA. The HJ becomes 2-fold symmetrical on binding to RuvC with unstacked arms; it has a different conformation from HJ DNA in complex with RuvA. In the full resolvosome a probable DNA-RuvA(4)-RuvB(12)-RuvC(2) complex forms which resolves the HJ. Requires Mg(2+) as cofactor.

It is found in the cytoplasm. It carries out the reaction Endonucleolytic cleavage at a junction such as a reciprocal single-stranded crossover between two homologous DNA duplexes (Holliday junction).. Functionally, the RuvA-RuvB-RuvC complex processes Holliday junction (HJ) DNA during genetic recombination and DNA repair. Endonuclease that resolves HJ intermediates. Cleaves cruciform DNA by making single-stranded nicks across the HJ at symmetrical positions within the homologous arms, yielding a 5'-phosphate and a 3'-hydroxyl group; requires a central core of homology in the junction. The consensus cleavage sequence is 5'-(A/T)TT(C/G)-3'. Cleavage occurs on the 3'-side of the TT dinucleotide at the point of strand exchange. HJ branch migration catalyzed by RuvA-RuvB allows RuvC to scan DNA until it finds its consensus sequence, where it cleaves and resolves the cruciform DNA. This Ehrlichia canis (strain Jake) protein is Crossover junction endodeoxyribonuclease RuvC.